The chain runs to 198 residues: Angiopoietin-like protein 8 (198 aa).

A signal peptide spans 1 to 15 (MAVLALCLLWTLASA).

It belongs to the ANGPTL8 family. As to quaternary structure, interacts with ANGPTL3. In terms of processing, proteolytically cleaved at the N-terminus. As to expression, expressed in liver and fat. Enriched in white and brown adipose tissues.

The protein localises to the secreted. In terms of biological role, hormone that acts as a blood lipid regulator by regulating serum triglyceride levels. May be involved in the metabolic transition between fasting and refeeding: required to direct fatty acids to adipose tissue for storage in the fed state. According to a report, may act by promoting ANGPTL3 cleavage. According to another study, not required for cleavage of ANGPTL3. The protein is Angiopoietin-like protein 8 of Mus musculus (Mouse).